Reading from the N-terminus, the 188-residue chain is Holliday junction branch migration complex subunit RuvA (188 aa).

The tract at residues 1–64 (MIAGISGRVL…QDGITLYGFS (64 aa)) is domain I. The domain II stretch occupies residues 65 to 143 (NERKKELFLS…SAGIKDMRIY (79 aa)). Position 143 (Tyr-143) is a region of interest, flexible linker. The tract at residues 143 to 188 (YHESLEALISLGYPEKQAREAVKHVYREGMKTSELIKEALKFLSQR) is domain III.

It belongs to the RuvA family. Homotetramer. Forms an RuvA(8)-RuvB(12)-Holliday junction (HJ) complex. HJ DNA is sandwiched between 2 RuvA tetramers; dsDNA enters through RuvA and exits via RuvB. An RuvB hexamer assembles on each DNA strand where it exits the tetramer. Each RuvB hexamer is contacted by two RuvA subunits (via domain III) on 2 adjacent RuvB subunits; this complex drives branch migration. In the full resolvosome a probable DNA-RuvA(4)-RuvB(12)-RuvC(2) complex forms which resolves the HJ.

It is found in the cytoplasm. In terms of biological role, the RuvA-RuvB-RuvC complex processes Holliday junction (HJ) DNA during genetic recombination and DNA repair, while the RuvA-RuvB complex plays an important role in the rescue of blocked DNA replication forks via replication fork reversal (RFR). RuvA specifically binds to HJ cruciform DNA, conferring on it an open structure. The RuvB hexamer acts as an ATP-dependent pump, pulling dsDNA into and through the RuvAB complex. HJ branch migration allows RuvC to scan DNA until it finds its consensus sequence, where it cleaves and resolves the cruciform DNA. This chain is Holliday junction branch migration complex subunit RuvA, found in Thermotoga petrophila (strain ATCC BAA-488 / DSM 13995 / JCM 10881 / RKU-1).